Here is a 288-residue protein sequence, read N- to C-terminus: Cell division protein DivIB (288 aa).

Residues 1–25 (MEKVIDITERVPAMKKRRRRRTNFK) are Cytoplasmic-facing. The chain crosses the membrane as a helical span at residues 26 to 46 (FLALVTIFLFIIIILLYFQLP). At 47 to 288 (YSDIKKIDIK…LEEQNEEEPE (242 aa)) the chain is on the extracellular side. In terms of domain architecture, POTRA spans 48–116 (SDIKKIDIKG…NEVQITVEEW (69 aa)). The span at 253–263 (LIKENTEKTEE) shows a compositional bias: basic and acidic residues. The disordered stretch occupies residues 253–288 (LIKENTEKTEEPAEETENADTEEGGQLEEQNEEEPE). Residues 264-288 (PAEETENADTEEGGQLEEQNEEEPE) show a composition bias toward acidic residues.

The protein belongs to the FtsQ/DivIB family. DivIB subfamily.

The protein localises to the cell membrane. In terms of biological role, cell division protein that may be involved in stabilizing or promoting the assembly of the division complex. The sequence is that of Cell division protein DivIB from Solibacillus silvestris (strain StLB046) (Bacillus silvestris).